Here is a 121-residue protein sequence, read N- to C-terminus: Protein TCL1B5 (121 aa).

Belongs to the TCL1 family.

The chain is Protein TCL1B5 (Tcl1b5) from Mus musculus (Mouse).